A 103-amino-acid chain; its full sequence is Large ribosomal subunit protein bL21 (103 aa).

It belongs to the bacterial ribosomal protein bL21 family. In terms of assembly, part of the 50S ribosomal subunit. Contacts protein L20.

Functionally, this protein binds to 23S rRNA in the presence of protein L20. The polypeptide is Large ribosomal subunit protein bL21 (Tolumonas auensis (strain DSM 9187 / NBRC 110442 / TA 4)).